The sequence spans 99 residues: Acylphosphatase-2 (99 aa).

An N-acetylserine modification is found at serine 2. The region spanning serine 9–tyrosine 99 is the Acylphosphatase-like domain. Active-site residues include arginine 24 and asparagine 42. Phosphoserine is present on serine 93.

The protein belongs to the acylphosphatase family.

It carries out the reaction an acyl phosphate + H2O = a carboxylate + phosphate + H(+). Its physiological role is not yet clear. This chain is Acylphosphatase-2 (ACYP2), found in Cavia porcellus (Guinea pig).